A 463-amino-acid polypeptide reads, in one-letter code: ATP-dependent protease ATPase subunit HslU (463 aa).

ATP is bound by residues Ile19, 61-66 (GVGKTE), Asp277, Glu341, and Arg413.

This sequence belongs to the ClpX chaperone family. HslU subfamily. A double ring-shaped homohexamer of HslV is capped on each side by a ring-shaped HslU homohexamer. The assembly of the HslU/HslV complex is dependent on binding of ATP.

The protein resides in the cytoplasm. In terms of biological role, ATPase subunit of a proteasome-like degradation complex; this subunit has chaperone activity. The binding of ATP and its subsequent hydrolysis by HslU are essential for unfolding of protein substrates subsequently hydrolyzed by HslV. HslU recognizes the N-terminal part of its protein substrates and unfolds these before they are guided to HslV for hydrolysis. The protein is ATP-dependent protease ATPase subunit HslU of Bacillus cereus (strain 03BB102).